Reading from the N-terminus, the 423-residue chain is Serine hydroxymethyltransferase (423 aa).

(6S)-5,6,7,8-tetrahydrofolate-binding positions include Leu-120 and 124–126; that span reads GHL. Lys-229 bears the N6-(pyridoxal phosphate)lysine mark. 353-355 contributes to the (6S)-5,6,7,8-tetrahydrofolate binding site; the sequence is SPF.

The protein belongs to the SHMT family. Homodimer. Requires pyridoxal 5'-phosphate as cofactor.

Its subcellular location is the cytoplasm. The catalysed reaction is (6R)-5,10-methylene-5,6,7,8-tetrahydrofolate + glycine + H2O = (6S)-5,6,7,8-tetrahydrofolate + L-serine. It participates in one-carbon metabolism; tetrahydrofolate interconversion. It functions in the pathway amino-acid biosynthesis; glycine biosynthesis; glycine from L-serine: step 1/1. Functionally, catalyzes the reversible interconversion of serine and glycine with tetrahydrofolate (THF) serving as the one-carbon carrier. This reaction serves as the major source of one-carbon groups required for the biosynthesis of purines, thymidylate, methionine, and other important biomolecules. Also exhibits THF-independent aldolase activity toward beta-hydroxyamino acids, producing glycine and aldehydes, via a retro-aldol mechanism. The polypeptide is Serine hydroxymethyltransferase (Synechococcus sp. (strain RCC307)).